The following is a 193-amino-acid chain: Probable nicotinate-nucleotide adenylyltransferase (193 aa).

This sequence belongs to the NadD family.

It carries out the reaction nicotinate beta-D-ribonucleotide + ATP + H(+) = deamido-NAD(+) + diphosphate. The protein operates within cofactor biosynthesis; NAD(+) biosynthesis; deamido-NAD(+) from nicotinate D-ribonucleotide: step 1/1. Functionally, catalyzes the reversible adenylation of nicotinate mononucleotide (NaMN) to nicotinic acid adenine dinucleotide (NaAD). This Chlorobium phaeovibrioides (strain DSM 265 / 1930) (Prosthecochloris vibrioformis (strain DSM 265)) protein is Probable nicotinate-nucleotide adenylyltransferase.